A 228-amino-acid chain; its full sequence is Cytochrome c oxidase subunit 2 (228 aa).

The Mitochondrial intermembrane segment spans residues 1 to 14; that stretch reads MPHASQLSLQEAMG. The helical transmembrane segment at 15–45 threads the bilayer; that stretch reads PTMEEVIFLHDHVLLLTCLMTMVITMFTLTA. At 46–59 the chain is on the mitochondrial matrix side; that stretch reads TTTALTHNDPTEEV. The chain crosses the membrane as a helical span at residues 60–87; sequence EQLEAAWTVAPIMILILTALPSVRSLYL. The Mitochondrial intermembrane portion of the chain corresponds to 88–228; the sequence is MEEVFNPYLT…HFEQWLISEQ (141 aa). Positions 162, 197, 199, 201, 205, and 208 each coordinate Cu cation. Glu-199 serves as a coordination point for Mg(2+).

This sequence belongs to the cytochrome c oxidase subunit 2 family. Component of the cytochrome c oxidase (complex IV, CIV), a multisubunit enzyme composed of 14 subunits. The complex is composed of a catalytic core of 3 subunits MT-CO1, MT-CO2 and MT-CO3, encoded in the mitochondrial DNA, and 11 supernumerary subunits COX4I, COX5A, COX5B, COX6A, COX6B, COX6C, COX7A, COX7B, COX7C, COX8 and NDUFA4, which are encoded in the nuclear genome. The complex exists as a monomer or a dimer and forms supercomplexes (SCs) in the inner mitochondrial membrane with NADH-ubiquinone oxidoreductase (complex I, CI) and ubiquinol-cytochrome c oxidoreductase (cytochrome b-c1 complex, complex III, CIII), resulting in different assemblies (supercomplex SCI(1)III(2)IV(1) and megacomplex MCI(2)III(2)IV(2)). Found in a complex with TMEM177, COA6, COX18, COX20, SCO1 and SCO2. Interacts with TMEM177 in a COX20-dependent manner. Interacts with COX20. Interacts with COX16. It depends on Cu cation as a cofactor.

The protein resides in the mitochondrion inner membrane. The enzyme catalyses 4 Fe(II)-[cytochrome c] + O2 + 8 H(+)(in) = 4 Fe(III)-[cytochrome c] + 2 H2O + 4 H(+)(out). Functionally, component of the cytochrome c oxidase, the last enzyme in the mitochondrial electron transport chain which drives oxidative phosphorylation. The respiratory chain contains 3 multisubunit complexes succinate dehydrogenase (complex II, CII), ubiquinol-cytochrome c oxidoreductase (cytochrome b-c1 complex, complex III, CIII) and cytochrome c oxidase (complex IV, CIV), that cooperate to transfer electrons derived from NADH and succinate to molecular oxygen, creating an electrochemical gradient over the inner membrane that drives transmembrane transport and the ATP synthase. Cytochrome c oxidase is the component of the respiratory chain that catalyzes the reduction of oxygen to water. Electrons originating from reduced cytochrome c in the intermembrane space (IMS) are transferred via the dinuclear copper A center (CU(A)) of subunit 2 and heme A of subunit 1 to the active site in subunit 1, a binuclear center (BNC) formed by heme A3 and copper B (CU(B)). The BNC reduces molecular oxygen to 2 water molecules using 4 electrons from cytochrome c in the IMS and 4 protons from the mitochondrial matrix. This is Cytochrome c oxidase subunit 2 (MT-CO2) from Lycodon semicarinatus (Ryukyu odd-tooth snake).